Consider the following 285-residue polypeptide: Bifunctional protein FolD (285 aa).

NADP(+) contacts are provided by residues glycine 165–serine 167 and serine 190.

Belongs to the tetrahydrofolate dehydrogenase/cyclohydrolase family. Homodimer.

The catalysed reaction is (6R)-5,10-methylene-5,6,7,8-tetrahydrofolate + NADP(+) = (6R)-5,10-methenyltetrahydrofolate + NADPH. It carries out the reaction (6R)-5,10-methenyltetrahydrofolate + H2O = (6R)-10-formyltetrahydrofolate + H(+). The protein operates within one-carbon metabolism; tetrahydrofolate interconversion. Its function is as follows. Catalyzes the oxidation of 5,10-methylenetetrahydrofolate to 5,10-methenyltetrahydrofolate and then the hydrolysis of 5,10-methenyltetrahydrofolate to 10-formyltetrahydrofolate. In Burkholderia ambifaria (strain ATCC BAA-244 / DSM 16087 / CCUG 44356 / LMG 19182 / AMMD) (Burkholderia cepacia (strain AMMD)), this protein is Bifunctional protein FolD.